The chain runs to 309 residues: Probable manganese-dependent inorganic pyrophosphatase (309 aa).

Mn(2+) is bound by residues H9, D13, D15, D75, H97, and D149.

This sequence belongs to the PPase class C family. It depends on Mn(2+) as a cofactor.

The protein resides in the cytoplasm. It carries out the reaction diphosphate + H2O = 2 phosphate + H(+). The protein is Probable manganese-dependent inorganic pyrophosphatase of Bacillus cereus (strain ZK / E33L).